The primary structure comprises 235 residues: Small ribosomal subunit protein uS3 (235 aa).

A KH type-2 domain is found at 39-107 (IREFIKEECK…ELHLNIVEVR (69 aa)). The segment at 213-235 (QARDRKAQELQDGPAPRGAGGRR) is disordered.

This sequence belongs to the universal ribosomal protein uS3 family. Part of the 30S ribosomal subunit. Forms a tight complex with proteins S10 and S14.

In terms of biological role, binds the lower part of the 30S subunit head. Binds mRNA in the 70S ribosome, positioning it for translation. In Ruegeria pomeroyi (strain ATCC 700808 / DSM 15171 / DSS-3) (Silicibacter pomeroyi), this protein is Small ribosomal subunit protein uS3.